Here is a 227-residue protein sequence, read N- to C-terminus: MAIKDWHEDDRPREKLLKFGAAHLSDAEILAIFLRTGTQSQSAIDLARHLIEQFGSLAELLAAPQETVLACHGIGPAKYAQILASLEIGRRYLDSQLKTGQGLGRSQMVKDYISTHLRGEPREVFAVLCLDNALNLINFEILFTGGISSCSVCIKHVLRHALSHATSQLIIAHNHPHTDATPSTADNLLTYELKKACDLIDLSLIDHVIVGRNETLSYAENCLAPFG.

The MPN domain maps to 102 to 224; it reads GLGRSQMVKD…TLSYAENCLA (123 aa). Residues H173, H175, and D186 each coordinate Zn(2+). The short motif at 173–186 is the JAMM motif element; it reads HNHPHTDATPSTAD.

Belongs to the UPF0758 family.

In Psychrobacter arcticus (strain DSM 17307 / VKM B-2377 / 273-4), this protein is UPF0758 protein Psyc_1834.